The sequence spans 426 residues: Serine--tRNA ligase (426 aa).

L-serine is bound at residue 233-235 (TAE). Residue 264 to 266 (RAE) participates in ATP binding. Position 287 (Glu287) interacts with L-serine. Residue 351–354 (EISS) coordinates ATP. L-serine is bound at residue Ser387.

Belongs to the class-II aminoacyl-tRNA synthetase family. Type-1 seryl-tRNA synthetase subfamily. In terms of assembly, homodimer. The tRNA molecule binds across the dimer.

Its subcellular location is the cytoplasm. It catalyses the reaction tRNA(Ser) + L-serine + ATP = L-seryl-tRNA(Ser) + AMP + diphosphate + H(+). It carries out the reaction tRNA(Sec) + L-serine + ATP = L-seryl-tRNA(Sec) + AMP + diphosphate + H(+). Its pathway is aminoacyl-tRNA biosynthesis; selenocysteinyl-tRNA(Sec) biosynthesis; L-seryl-tRNA(Sec) from L-serine and tRNA(Sec): step 1/1. Functionally, catalyzes the attachment of serine to tRNA(Ser). Is also able to aminoacylate tRNA(Sec) with serine, to form the misacylated tRNA L-seryl-tRNA(Sec), which will be further converted into selenocysteinyl-tRNA(Sec). The sequence is that of Serine--tRNA ligase from Clostridium kluyveri (strain NBRC 12016).